The following is a 504-amino-acid chain: Protein DETOXIFICATION 38 (504 aa).

Helical transmembrane passes span 56 to 76 (LLLRLALPAILVYLINGGMGI), 90 to 110 (LAAASIGNSSFSLVYALMLGM), 139 to 159 (IVLALVGFPMTILYTFSYPIL), 170 to 190 (YMGSLYIAGLIPQIFAYAVYF), 208 to 228 (ISAAALVLQISLTWITVYAMG), 234 to 254 (IAYVLTISWWFIVGAQTFYVI), 273 to 295 (GLWSFFKLSAGSAVMICLELWYT), 316 to 336 (SICMSISALSFMVSVGFNAAV), 356 to 376 (TWTATFVSFVISVVEALVVIA), 401 to 421 (FLAVTIILNGIQPVLSGVAVG), 433 to 453 (IGCYYIVGIPIGCILGFTFNF), and 457 to 477 (GIWTGMIGGTLMQTLILLYVT).

This sequence belongs to the multi antimicrobial extrusion (MATE) (TC 2.A.66.1) family.

The protein localises to the membrane. The sequence is that of Protein DETOXIFICATION 38 from Arabidopsis thaliana (Mouse-ear cress).